A 202-amino-acid chain; its full sequence is Cilia- and flagella-associated protein 418 (202 aa).

A disordered region spans residues 71 to 90 (DVDTPTSTHEPSPAKASSSA). Residues 74–90 (TPTSTHEPSPAKASSSA) show a composition bias toward polar residues.

Ubiquitously expressed during early development and in adult tissues including the eye, brain, heart and kidney.

The protein resides in the cytoplasm. The protein localises to the photoreceptor inner segment. May be involved in photoreceptor outer segment disk morphogenesis. The chain is Cilia- and flagella-associated protein 418 (cfap418) from Danio rerio (Zebrafish).